The chain runs to 460 residues: Kynureninase (460 aa).

Residues Leu-116, Thr-117, 144 to 147, Ser-199, Asp-228, His-231, and Tyr-253 each bind pyridoxal 5'-phosphate; that span reads FPSD. Lys-254 carries the N6-(pyridoxal phosphate)lysine modification. Pyridoxal 5'-phosphate-binding residues include Trp-288 and Asn-316.

The protein belongs to the kynureninase family. In terms of assembly, homodimer. Requires pyridoxal 5'-phosphate as cofactor.

It is found in the cytoplasm. The enzyme catalyses L-kynurenine + H2O = anthranilate + L-alanine + H(+). The catalysed reaction is 3-hydroxy-L-kynurenine + H2O = 3-hydroxyanthranilate + L-alanine + H(+). Its pathway is amino-acid degradation; L-kynurenine degradation; L-alanine and anthranilate from L-kynurenine: step 1/1. It participates in cofactor biosynthesis; NAD(+) biosynthesis; quinolinate from L-kynurenine: step 2/3. In terms of biological role, catalyzes the cleavage of L-kynurenine (L-Kyn) and L-3-hydroxykynurenine (L-3OHKyn) into anthranilic acid (AA) and 3-hydroxyanthranilic acid (3-OHAA), respectively. The chain is Kynureninase from Debaryomyces hansenii (strain ATCC 36239 / CBS 767 / BCRC 21394 / JCM 1990 / NBRC 0083 / IGC 2968) (Yeast).